Consider the following 410-residue polypeptide: Diguanylate cyclase DgcM (410 aa).

2 consecutive PAS domains span residues 3 to 70 and 129 to 198; these read THNF…NQHD and GFYA…HLPG. The PAC domain occupies 199-251; the sequence is GHKPLNFVHKLADGSTRHVQTYAGPIEIYGDKLMLCIVHDITEQKRLEEQLEH. Residues 283–410 enclose the GGDEF domain; it reads QDYSLLLIDT…NDGRNRVLAA (128 aa). D291 contacts Mg(2+). Residues N299, H304, and D308 each coordinate substrate. Residue E334 coordinates Mg(2+). The active-site Proton acceptor is E334.

In terms of assembly, forms homodimers and homotetramers. Interacts with PdeR and MlrA. The cofactor is Mg(2+).

It carries out the reaction 2 GTP = 3',3'-c-di-GMP + 2 diphosphate. It participates in purine metabolism; 3',5'-cyclic di-GMP biosynthesis. Its activity is regulated as follows. Activity is inhibited by the phosphodiesterase PdeR. Inhibition is relieved by high cellular c-di-GMP levels. Part of a signaling cascade that regulates curli biosynthesis. The cascade is composed of two cyclic-di-GMP (c-di-GMP) control modules, in which c-di-GMP controlled by the DgcE/PdeH pair (module I) regulates the activity of the DgcM/PdeR pair (module II), which in turn regulates activity of the transcription factor MlrA and expression of the master biofilm regulator csgD. DgcM stimulates activity of MlrA by direct interaction, leading to the transcription of csgD. It also catalyzes the synthesis of c-di-GMP via the condensation of 2 GTP molecules, which contributes to the c-di-GMP pool generated by module I in a positive feedback loop. Production of c-di-GMP contributes to but is not essential for MlrA activation. The sequence is that of Diguanylate cyclase DgcM from Escherichia coli (strain K12).